The chain runs to 4004 residues: Hybrid PKS-NRPS synthetase mpsA (4004 aa).

Positions 5 to 438 constitute a Ketosynthase family 3 (KS3) domain; it reads NEPIAVIGSA…GANAHAILES (434 aa). Residues cysteine 178, histidine 317, and histidine 358 each act as for beta-ketoacyl synthase activity in the active site. Positions 544–867 constitute a Malonyl-CoA:ACP transacylase (MAT) domain; sequence VFTGQGAQWP…RGGDDVNAFS (324 aa). The tract at residues 933–1066 is N-terminal hotdog fold; it reads HPILGVKSIE…GTISITLGIP (134 aa). Residues 933–1233 form a dehydratase (DH) domain region; the sequence is HPILGVKSIE…SMVPFSNATA (301 aa). Residues 933–1234 enclose the PKS/mFAS DH domain; that stretch reads HPILGVKSIE…MVPFSNATAE (302 aa). Residue histidine 966 is the Proton acceptor; for dehydratase activity of the active site. A C-terminal hotdog fold region spans residues 1081-1234; the sequence is MVDVEVDRFY…MVPFSNATAE (154 aa). Aspartate 1141 (proton donor; for dehydratase activity) is an active-site residue. Positions 1289–1575 are methyltransferase (MT) domain; that stretch reads EEEEQTLIHY…DTYAPNFDSL (287 aa). Positions 2102–2272 constitute a Ketoreductase (KR) domain; the sequence is TYFMVGLSGE…RRGLAASILG (171 aa). In terms of domain architecture, Carrier 1 spans 2384–2462; sequence EVVEIMQAGF…DLLNDALDRL (79 aa). An O-(pantetheine 4'-phosphoryl)serine modification is found at serine 2422. Residues 2471-2540 are disordered; it reads GADPSSVSRP…ERRAAELARK (70 aa). Residues 2488–2500 show a composition bias toward low complexity; the sequence is PSVSRPASNAPPV. Basic and acidic residues predominate over residues 2514–2540; the sequence is LKAEREREAEAKRKREEERRAAELARK. Residues 2584-3019 form a condensation (C) domain region; it reads PMSFGQSRFW…RQCAERPGRE (436 aa). The interval 3060-3459 is adenylation (A) (KR) domain; sequence KRHTASLAIK…GRIEGDTQIK (400 aa). The region spanning 3570 to 3647 is the Carrier 2 domain; the sequence is ANLTPTESRL…GMARAIDDAT (78 aa). Residue serine 3607 is modified to O-(pantetheine 4'-phosphoryl)serine. The interval 3694 to 3924 is reductase (RED) domain; sequence LTIVLTGATG…VVEGVAQALF (231 aa).

In the C-terminal section; belongs to the NRP synthetase family. The cofactor is pantetheine 4'-phosphate.

It functions in the pathway secondary metabolite biosynthesis. Its function is as follows. Hybrid PKS-NRPS synthetase; part of the gene cluster that mediates the biosynthesis of macrophasetins, 3-decalinoyltetramic acids (DTAs) which feature a tetramate (pyrrolidine-2,4-dione) unit connected to a decalin fragment and that have potent bioactivities. The PKS-NRPS mpsA together with its associated enoylreductase partner mpsG incorporate one unit of acetyl-CoA, seven units of malonyl-CoA, and one unit of L-alanine to assemble the linear tetramic acid intermediate corresponding to the backbone of macrophasetins. Without the Diels-Alderase mpsD, the mpsA/G product can undergo the non-enzymatic intramolecular Diels-Alder (IMDA) reaction to generate both macrophasetin A and macrophasetin B. Catalyzed by mpsD, the linear tetramic acid intermediate is thoroughly converted to macrophasetin A via the endo-IMDA reaction in a regioselective and stereoselective manner. Finally, the cytochrome P450 monooxygenase mpsF catalyzes the hydroxylation at C20 to yield the end product macrophasetin C. In Macrophomina phaseolina (strain MS6) (Charcoal rot fungus), this protein is Hybrid PKS-NRPS synthetase mpsA.